Here is an 860-residue protein sequence, read N- to C-terminus: Leucine--tRNA ligase (860 aa).

The short motif at 42 to 52 is the 'HIGH' region element; it reads PYPSGRLHMGH. The 'KMSKS' region motif lies at 619-623; that stretch reads KMSKS. K622 serves as a coordination point for ATP.

Belongs to the class-I aminoacyl-tRNA synthetase family.

The protein resides in the cytoplasm. It catalyses the reaction tRNA(Leu) + L-leucine + ATP = L-leucyl-tRNA(Leu) + AMP + diphosphate. The polypeptide is Leucine--tRNA ligase (Escherichia coli O127:H6 (strain E2348/69 / EPEC)).